Here is an 82-residue protein sequence, read N- to C-terminus: NADH-ubiquinone oxidoreductase 9.5 kDa subunit (82 aa).

The helical transmembrane segment at 25–43 (AYFYSCVIAGLGPVFLTVV) threads the bilayer.

Belongs to the complex I NDUFA3 subunit family. Complex I is composed of about 40 different subunits.

Its subcellular location is the mitochondrion inner membrane. In terms of biological role, accessory subunit of the mitochondrial membrane respiratory chain NADH dehydrogenase (Complex I), that is believed not to be involved in catalysis. Complex I functions in the transfer of electrons from NADH to the respiratory chain. The immediate electron acceptor for the enzyme is believed to be ubiquinone. This subunit binds ubiquinone. The chain is NADH-ubiquinone oxidoreductase 9.5 kDa subunit (nuo9.5) from Neurospora crassa (strain ATCC 24698 / 74-OR23-1A / CBS 708.71 / DSM 1257 / FGSC 987).